Here is a 343-residue protein sequence, read N- to C-terminus: S-adenosylmethionine:tRNA ribosyltransferase-isomerase (343 aa).

This sequence belongs to the QueA family. Monomer.

Its subcellular location is the cytoplasm. The enzyme catalyses 7-aminomethyl-7-carbaguanosine(34) in tRNA + S-adenosyl-L-methionine = epoxyqueuosine(34) in tRNA + adenine + L-methionine + 2 H(+). The protein operates within tRNA modification; tRNA-queuosine biosynthesis. Transfers and isomerizes the ribose moiety from AdoMet to the 7-aminomethyl group of 7-deazaguanine (preQ1-tRNA) to give epoxyqueuosine (oQ-tRNA). This chain is S-adenosylmethionine:tRNA ribosyltransferase-isomerase, found in Coxiella burnetii (strain RSA 331 / Henzerling II).